We begin with the raw amino-acid sequence, 683 residues long: DNA ligase (683 aa).

Residues 42–46 (DAEYD), 91–92 (SL), and Glu122 contribute to the NAD(+) site. The active-site N6-AMP-lysine intermediate is Lys124. Residues Arg145, Glu182, Lys299, and Lys323 each contribute to the NAD(+) site. Residues Cys417, Cys420, Cys435, and Cys441 each contribute to the Zn(2+) site. The BRCT domain maps to 602–683 (APQGVLAGKT…MRKLLEGQTT (82 aa)).

It belongs to the NAD-dependent DNA ligase family. LigA subfamily. The cofactor is Mg(2+). It depends on Mn(2+) as a cofactor.

It catalyses the reaction NAD(+) + (deoxyribonucleotide)n-3'-hydroxyl + 5'-phospho-(deoxyribonucleotide)m = (deoxyribonucleotide)n+m + AMP + beta-nicotinamide D-nucleotide.. In terms of biological role, DNA ligase that catalyzes the formation of phosphodiester linkages between 5'-phosphoryl and 3'-hydroxyl groups in double-stranded DNA using NAD as a coenzyme and as the energy source for the reaction. It is essential for DNA replication and repair of damaged DNA. The protein is DNA ligase of Paraburkholderia phymatum (strain DSM 17167 / CIP 108236 / LMG 21445 / STM815) (Burkholderia phymatum).